A 247-amino-acid polypeptide reads, in one-letter code: Adenylate kinase (247 aa).

42-47 (GAGKGT) contributes to the ATP binding site. The segment at 62–91 (ATGDMLRAQVTAKTELGVQAKKIMDQGGLV) is NMP. Residues T63, R68, 89 to 91 (GLV), 118 to 121 (GFPR), and Q125 each bind AMP. Residues 159 to 196 (GRLVHPASGRSYHKLFNPPKKEMTDDQTGEPLVQRSDD) are LID. Residues R160 and 169–170 (SY) contribute to the ATP site. The tract at residues 169–191 (SYHKLFNPPKKEMTDDQTGEPLV) is disordered. Residues R193 and R204 each coordinate AMP. An ATP-binding site is contributed by Q232.

The protein belongs to the adenylate kinase family. AK2 subfamily. As to quaternary structure, monomer.

It is found in the cytoplasm. It localises to the cytosol. The protein localises to the mitochondrion intermembrane space. It catalyses the reaction AMP + ATP = 2 ADP. In terms of biological role, catalyzes the reversible transfer of the terminal phosphate group between ATP and AMP. Plays an important role in cellular energy homeostasis and in adenine nucleotide metabolism. Adenylate kinase activity is critical for regulation of the phosphate utilization and the AMP de novo biosynthesis pathways. The sequence is that of Adenylate kinase from Meyerozyma guilliermondii (strain ATCC 6260 / CBS 566 / DSM 6381 / JCM 1539 / NBRC 10279 / NRRL Y-324) (Yeast).